A 77-amino-acid chain; its full sequence is Large ribosomal subunit protein uL24c (77 aa).

It belongs to the universal ribosomal protein uL24 family. As to quaternary structure, part of the 50S ribosomal subunit.

It localises to the plastid. The protein resides in the chloroplast. Functionally, one of two assembly initiator proteins, it binds directly to the 5'-end of the 23S rRNA, where it nucleates assembly of the 50S subunit. This Thalassiosira pseudonana (Marine diatom) protein is Large ribosomal subunit protein uL24c (rpl24).